The sequence spans 273 residues: Putative phosphoenolpyruvate synthase regulatory protein (273 aa).

An ADP-binding site is contributed by 154–161; the sequence is GVSRSGKT.

Belongs to the pyruvate, phosphate/water dikinase regulatory protein family. PSRP subfamily.

The enzyme catalyses [pyruvate, water dikinase] + ADP = [pyruvate, water dikinase]-phosphate + AMP + H(+). It catalyses the reaction [pyruvate, water dikinase]-phosphate + phosphate + H(+) = [pyruvate, water dikinase] + diphosphate. Functionally, bifunctional serine/threonine kinase and phosphorylase involved in the regulation of the phosphoenolpyruvate synthase (PEPS) by catalyzing its phosphorylation/dephosphorylation. The sequence is that of Putative phosphoenolpyruvate synthase regulatory protein from Neisseria meningitidis serogroup C (strain 053442).